Consider the following 318-residue polypeptide: Pheromone-regulated membrane protein 5 (318 aa).

A helical transmembrane segment spans residues 75–98 (GTVFIVVGGIAGVIFLAILLWWVI). S129 carries the phosphoserine modification. Residues 238 to 247 (TISSSSASSL) show a composition bias toward low complexity. The segment at 238-318 (TISSSSASSL…HMLEGKEQDE (81 aa)) is disordered. Basic and acidic residues predominate over residues 250–261 (GNEKEVGEDIRK). Residues 276–285 (SPESDGSVNR) are compositionally biased toward polar residues. S279, S282, and S288 each carry phosphoserine. The segment covering 309–318 (HMLEGKEQDE) has biased composition (basic and acidic residues). K314 participates in a covalent cross-link: Glycyl lysine isopeptide (Lys-Gly) (interchain with G-Cter in ubiquitin).

Belongs to the PRM5 family.

The protein localises to the membrane. This chain is Pheromone-regulated membrane protein 5 (PRM5), found in Saccharomyces cerevisiae (strain ATCC 204508 / S288c) (Baker's yeast).